A 341-amino-acid chain; its full sequence is Guanine nucleotide-binding protein subunit beta (341 aa).

7 WD repeats span residues 54–84, 96–126, 142–171, 183–213, 225–255, 269–299, and 311–341; these read GHLA…IVWD, LRSS…SIYS, GHTG…ALWN, GHTG…KLFD, GHES…RLFD, NIIC…NVWD, and GHDN…KIWN.

Belongs to the WD repeat G protein beta family. G proteins are composed of 3 units, alpha, beta and gamma.

Its function is as follows. Guanine nucleotide-binding proteins (G proteins) are involved as a modulator or transducer in various transmembrane signaling systems. The beta and gamma chains are required for the GTPase activity, for replacement of GDP by GTP, and for G protein-effector interaction. The sequence is that of Guanine nucleotide-binding protein subunit beta from Loligo forbesii (Veined squid).